Reading from the N-terminus, the 526-residue chain is Choline/ethanolamine transporter FLVCR2 (526 aa).

A disordered region spans residues 1–70 (MVNEGPNQEE…PSGLAHPSSS (70 aa)). Topologically, residues 1 to 76 (MVNEGPNQEE…PSSSGPEDLS (76 aa)) are cytoplasmic. 1–84 (MVNEGPNQEE…LSVIKVSRRR (84 aa)) contacts heme b. 5 consecutive repeat copies span residues 25 to 30 (PSVSVH), 31 to 36 (PSVSVH), 37 to 42 (PSVSIN), 43 to 48 (PSVSVH), and 49 to 54 (PSSSAH). A compositionally biased stretch (low complexity) spans 25–56 (PSVSVHPSVSVHPSVSINPSVSVHPSSSAHPS). Residues 25–72 (PSVSVHPSVSVHPSVSINPSVSVHPSSSAHPSALAQPSGLAHPSSSGP) form an 8 X 6 AA tandem repeats of P-S-[VS]-S-[VIAG]-[HNP] region. One copy of the 6; approximate repeat lies at 55-60 (PSALAQ). A 7; approximate repeat occupies 61–66 (PSGLAH). Repeat unit 8 spans residues 67 to 72 (PSSSGP). Residues 77 to 101 (VIKVSRRRWAVVLVFSCYSMCNSFQ) form a helical membrane-spanning segment. Positions 98 and 102 each coordinate choline. Topologically, residues 102–119 (WIQYGSINNIFMHFYGVS) are extracellular. Residues 120–147 (AFAIDWLSMCYMLTYIPLLLPVAWLLEK) form a helical membrane-spanning segment. Over 148–149 (FG) the chain is Cytoplasmic. The chain crosses the membrane as a helical span at residues 150 to 169 (LRTIALTGSALNCLGAWVKL). The Extracellular portion of the chain corresponds to 170 to 176 (GSLKPHL). Residues 177–205 (FPVTVVGQLICSVAQVFILGMPSRIASVW) traverse the membrane as a helical segment. The choline site is built by Q191 and L195. Over 206 to 210 (FGANE) the chain is Cytoplasmic. A helical transmembrane segment spans residues 211–236 (VSTACSVAVFGNQLGIAIGFLVPPVL). The Extracellular portion of the chain corresponds to 237–241 (VPNIE). Residues 242–271 (DRDELAYHISIMFYIIGGVATLLLILVIIV) form a helical membrane-spanning segment. The Cytoplasmic segment spans residues 272-307 (FKEKPKYPPSRAQSLSYALTSPDASYLGSIARLFKN). A helical membrane pass occupies residues 308 to 338 (LNFVLLVITYGLNAGAFYALSTLLNRMVIWH). A choline-binding site is contributed by Y325. At 339–342 (YPGE) the chain is on the extracellular side. The helical transmembrane segment at 343–371 (EVNAGRIGLTIVIAGMLGAVISGIWLDRS) threads the bilayer. Residues 372–373 (KT) are Cytoplasmic-facing. Residues 374-396 (YKETTLVVYIMTLVGMVVYTFTL) form a helical membrane-spanning segment. Over 397 to 399 (NLG) the chain is Extracellular. Residues 400–429 (HLWVVFITAGTMGFFMTGYLPLGFEFAVEL) form a helical membrane-spanning segment. Residues 430-437 (TYPESEGI) lie on the Cytoplasmic side of the membrane. A helical membrane pass occupies residues 438-463 (SSGLLNISAQVFGIIFTISQGQIIDN). Q447 contributes to the choline binding site. The Extracellular segment spans residues 464–465 (YG). A helical transmembrane segment spans residues 466 to 488 (TKPGNIFLCVFLTLGAALTAFIK). The Cytoplasmic segment spans residues 489-526 (ADLRRQKANKETLENKLQEEEEESNTSKVPTAVSEDHL). Positions 500–526 (TLENKLQEEEEESNTSKVPTAVSEDHL) are disordered. Position 515 is a phosphoserine (S515).

The protein belongs to the major facilitator superfamily. Feline leukemia virus subgroup C receptor (TC 2.A.1.28.1) family. Interacts with components of electron transfer chain complexes III, IV and V including CYC1, NDUFA4, COX4I1, ATP5PD and ATP5F1C; these interactions occur in the absence of heme and are disrupted upon heme binding. Interacts with ATP2A2; this interaction occurs in the absence of heme and promotes ATP2A2 proteasomal degradation; the complex is dissociated upon heme binding. Interacts with HMOX1; this interaction is potentiated in the presence of heme. In terms of tissue distribution, expressed in non-hematopoietic tissues, with relative abundant expression in brain, placenta, lung, liver and kidney. Also expressed in hematopoietic tissues (fetal liver, spleen, lymph node, thymus, leukocytes and bone marrow). Found in acidophil cells of the pituitary that secrete growth hormone and prolactin (at protein level).

The protein resides in the cell membrane. The protein localises to the mitochondrion membrane. It localises to the endoplasmic reticulum membrane. It catalyses the reaction choline(out) = choline(in). The enzyme catalyses ethanolamine(in) = ethanolamine(out). The catalysed reaction is heme b(in) = heme b(out). Choline uniporter that specifically mediates choline uptake at the blood-brain-barrier. Responsible for the majority of choline uptake across the blood-brain-barrier from the circulation into the brain. Choline, a nutrient critical for brain development, is a precursor of phosphatidylcholine, as well as betaine. Also mediates transport of ethanolamine. Choline and ethanolamine transport is not coupled with proton transport and is exclusively driven by the choline gradient across the plasma membrane. However, the presence of an inwardly directed proton gradient enhances choline uptake. Also acts as a heme b transporter. Required to regulate mitochondrial respiration processes, ATP synthesis and thermogenesis. At low heme levels, interacts with components of electron transfer chain (ETC) complexes and ATP2A2, leading to ubiquitin-mediated degradation of ATP2A2 and inhibition of thermogenesis. Upon heme binding, dissociates from ETC complexes to allow switching from mitochondrial ATP synthesis to thermogenesis. This chain is Choline/ethanolamine transporter FLVCR2, found in Homo sapiens (Human).